Reading from the N-terminus, the 105-residue chain is MKKIRKGDSVIVIAGKDKGKQSTVIRFQSTERVIVREVNKVKSHIKPNPNRNIAGGIVETEKPLHISNIAIFNPEKNKADRVGFRFNESGNKVRYFKSDGTLIDS.

The protein belongs to the universal ribosomal protein uL24 family. In terms of assembly, part of the 50S ribosomal subunit.

In terms of biological role, one of two assembly initiator proteins, it binds directly to the 5'-end of the 23S rRNA, where it nucleates assembly of the 50S subunit. One of the proteins that surrounds the polypeptide exit tunnel on the outside of the subunit. This is Large ribosomal subunit protein uL24 from Nitrosomonas europaea (strain ATCC 19718 / CIP 103999 / KCTC 2705 / NBRC 14298).